The primary structure comprises 527 residues: UvrABC system protein C (527 aa).

Residues 9–87 enclose the GIY-YIG domain; that stretch reads KNPGCYIYKN…IKKYSPKYNI (79 aa). The UVR domain maps to 191-226; it reads DSLIHELKNEMNEKSKNLQFEEALLIREEINAIERL.

The protein belongs to the UvrC family. As to quaternary structure, interacts with UvrB in an incision complex.

The protein localises to the cytoplasm. The UvrABC repair system catalyzes the recognition and processing of DNA lesions. UvrC both incises the 5' and 3' sides of the lesion. The N-terminal half is responsible for the 3' incision and the C-terminal half is responsible for the 5' incision. The protein is UvrABC system protein C of Methanococcus maripaludis (strain DSM 14266 / JCM 13030 / NBRC 101832 / S2 / LL).